Consider the following 940-residue polypeptide: Serine/threonine-protein phosphatase 1 regulatory subunit 10 (940 aa).

Residues 1–348 (MGSGPIDPKE…EPAPPSEAMD (348 aa)) are interaction with TOX4. The TFIIS N-terminal domain maps to 73-147 (KLLNNWLTYS…SDWMAVIRSQ (75 aa)). Disordered stretches follow at residues 147-211 (QSST…FRST), 247-270 (SNVA…NTTP), 304-400 (KIKK…KSVT), and 533-905 (YVET…HGGD). Basic and acidic residues-rich tracts occupy residues 153–166 (AEKD…EGKS) and 174–196 (PLTE…EKPK). Residue Lys179 forms a Glycyl lysine isopeptide (Lys-Gly) (interchain with G-Cter in SUMO2) linkage. Residue Thr256 is modified to Phosphothreonine. Residue Lys262 forms a Glycyl lysine isopeptide (Lys-Gly) (interchain with G-Cter in SUMO2) linkage. Position 313 is a phosphoserine (Ser313). Residues 325–336 (KTSTEPSTAKPS) show a composition bias toward low complexity. Residues 357–433 (PPVEVPELMD…NKIKDFGEAA (77 aa)) are necessary for interaction with PPP1CA. Ser382 is subject to Phosphoserine. Residues 393–408 (GRKRKSVTWPEEGKLR) are necessary for interaction with PPP1CC. A PP1-binding motif motif is present at residues 394–423 (RKRKSVTWPEEGKLREYFYFELDETERVNV). Position 398 is a phosphoserine; by PKA (Ser398). An interaction with WDR82 region spans residues 418–619 (TERVNVNKIK…IKQMLVPHGL (202 aa)). Composition is skewed to gly residues over residues 540–551 (GGSGGSPDGAGG) and 565–579 (MGAG…GGGI). Residue Ser545 is modified to Phosphoserine. Positions 583–595 (EILTSIMGSPNSH) are enriched in polar residues. Ser591 is subject to Phosphoserine. Positions 596–611 (PSEELLKQPDYSDKIK) are enriched in basic and acidic residues. Over residues 644-655 (PPGPGGPMPGPH) the composition is skewed to pro residues. Arg665 bears the Omega-N-methylarginine mark. The span at 676 to 690 (GDPFWDGPGDPMRGG) shows a compositional bias: low complexity. An Omega-N-methylarginine modification is found at Arg693. The span at 714-723 (EPPPPPPPPF) shows a compositional bias: pro residues. Composition is skewed to gly residues over residues 726–764 (ARGG…GMGN) and 790–845 (SSMG…GSGG). At Arg739 the chain carries Omega-N-methylarginine. 2 stretches are compositionally biased toward basic and acidic residues: residues 862-886 (PHDV…HDGP) and 894-903 (RGHDGGHSHG). The C3H1-type zinc finger occupies 906–934 (MSNRPVCRHFMMKGNCRYENNCAFYHPGV).

Component of the PNUTS-PP1 complex (also named PTW/PP1 complex), composed of PPP1R10/PNUTS, TOX4, WDR82, and PPP1CA (or PPP1CB or PPP1CC). Phosphorylated on Ser-398 by PKA within the region necessary for interaction with PPP1CA.

It localises to the nucleus. The protein localises to the chromosome. Its function is as follows. Substrate-recognition component of the PNUTS-PP1 protein phosphatase complex, a protein phosphatase 1 (PP1) complex that promotes RNA polymerase II transcription pause-release, allowing transcription elongation. Promoter-proximal pausing by RNA polymerase II is a transcription halt following transcription initiation but prior to elongation, which acts as a checkpoint to control that transcripts are favorably configured for transcriptional elongation. The PNUTS-PP1 complex mediates the release of RNA polymerase II from promoter-proximal region of genes by catalyzing dephosphorylation of proteins involved in transcription, such as AFF4, CDK9, MEPCE, INTS12, NCBP1, POLR2M/GDOWN1 and SUPT6H. The PNUTS-PP1 complex also regulates RNA polymerase II transcription termination by mediating dephosphorylation of SUPT5H in termination zones downstream of poly(A) sites, thereby promoting deceleration of RNA polymerase II transcription. PNUTS-PP1 complex is also involved in the response to replication stress by mediating dephosphorylation of POLR2A at 'Ser-5' of the CTD, promoting RNA polymerase II degradation. The PNUTS-PP1 complex also plays a role in the control of chromatin structure and cell cycle progression during the transition from mitosis into interphase. PNUTS-PP1 complex mediates dephosphorylation of MYC, promoting MYC stability by preventing MYC ubiquitination by the SCF(FBXW7) complex. In addition to acts as a substrate-recognition component, PPP1R10/PNUTS also acts as a nuclear targeting subunit for the PNUTS-PP1 complex. In some context, PPP1R10/PNUTS also acts as an inhibitor of protein phosphatase 1 (PP1) activity by preventing access to substrates, such as RB. The sequence is that of Serine/threonine-protein phosphatase 1 regulatory subunit 10 (PPP1R10) from Macaca mulatta (Rhesus macaque).